Reading from the N-terminus, the 374-residue chain is Protein STRICTOSIDINE SYNTHASE-LIKE 10 (374 aa).

Residues 1 to 18 (MTMMIITVFLTVIAAVLA) form the signal peptide. N-linked (GlcNAc...) asparagine glycosylation is present at N50.

It belongs to the strictosidine synthase family.

It is found in the vacuole. This is Protein STRICTOSIDINE SYNTHASE-LIKE 10 from Arabidopsis thaliana (Mouse-ear cress).